Reading from the N-terminus, the 507-residue chain is Tabersonine/lochnericine 19-hydroxylase (507 aa).

A helical transmembrane segment spans residues 8–28 (FFVLLLPFFIGIAFIYKLWNF). N-linked (GlcNAc...) asparagine glycosylation occurs at N167. Residue C447 participates in heme binding.

This sequence belongs to the cytochrome P450 family. The cofactor is heme. In terms of tissue distribution, confined to roots.

It localises to the endoplasmic reticulum membrane. It carries out the reaction (-)-tabersonine + reduced [NADPH--hemoprotein reductase] + O2 = (-)-(R)-19-hydroxytabersonine + oxidized [NADPH--hemoprotein reductase] + H2O + H(+). It catalyses the reaction lochnericine + reduced [NADPH--hemoprotein reductase] + O2 = horhammericine + oxidized [NADPH--hemoprotein reductase] + H2O + H(+). The catalysed reaction is (-)-vincadifformine + reduced [NADPH--hemoprotein reductase] + O2 = (-)-minovincinine + oxidized [NADPH--hemoprotein reductase] + H2O + H(+). It participates in alkaloid biosynthesis. Component of the monoterpenoid indole alkaloids (MIAs, e.g. echitovenine, tabersonine, lochnericine, 19-hydroxytabersonine and horhammericine) biosynthetic pathway; MIAs are used in cancer treatment and other medical applications. Cytochrome P450 catalyzing the conversion of (-)-tabersonine to 19-hydroxytabersonine, of lochnericine to horhammericine and of (-)-vincadifformine to (-)-minovincinine. This Catharanthus roseus (Madagascar periwinkle) protein is Tabersonine/lochnericine 19-hydroxylase.